A 184-amino-acid chain; its full sequence is 3-hydroxyanthranilate 3,4-dioxygenase (184 aa).

Residue arginine 44 coordinates O2. Fe cation contacts are provided by histidine 48, glutamate 54, and histidine 92. Glutamate 54 serves as a coordination point for substrate. Substrate is bound by residues arginine 96 and glutamate 106. 4 residues coordinate a divalent metal cation: cysteine 121, cysteine 126, cysteine 162, and cysteine 165.

The protein belongs to the 3-HAO family. It depends on Fe(2+) as a cofactor.

The protein resides in the cytoplasm. The catalysed reaction is 3-hydroxyanthranilate + O2 = (2Z,4Z)-2-amino-3-carboxymuconate 6-semialdehyde. It participates in cofactor biosynthesis; NAD(+) biosynthesis; quinolinate from L-kynurenine: step 3/3. Its function is as follows. Catalyzes the oxidative ring opening of 3-hydroxyanthranilate to 2-amino-3-carboxymuconate semialdehyde, which spontaneously cyclizes to quinolinate. The sequence is that of 3-hydroxyanthranilate 3,4-dioxygenase from Pyricularia oryzae (strain 70-15 / ATCC MYA-4617 / FGSC 8958) (Rice blast fungus).